Reading from the N-terminus, the 185-residue chain is Neuronal vesicle trafficking-associated protein 1 (185 aa).

Residues 1 to 82 (MVKLGNNFAE…ITEGVTERFK (82 aa)) are Cytoplasmic-facing. Residues 83-103 (VSVLVLFALAFLTCVVFLVVY) traverse the membrane as a helical; Signal-anchor for type II membrane protein segment. At 104 to 185 (KVYKYDRACP…QETEAAEKSA (82 aa)) the chain is on the lumenal side. Positions 129–164 (ESYYTEQDSSAREKFYTVINHYNVAKQSITRSVSPW) are required for GRIP1 interaction.

The protein belongs to the NSG family. In terms of assembly, forms a complex with GRIP1, GRIA2 and STX12 through direct interaction with GRIP1; controls the intracellular fate of AMPAR and the endosomal sorting of the GRIA2 subunit toward recycling and membrane targeting. Interacts with STX12. Interacts with APP; could regulate APP processing. Interacts with FAM171A1. As to expression, pituitary and less in adrenal gland and testis. Expressed in the hippocampus throughout development. At P0, highly and broadly expressed throughout the cortical plate, but is down-regulated overall at P8 and P14, but remains relatively enriched in layer V. At P0 is expressed ubiquitously in the developing cerebellum namely Purkinje neurons as well as granule neurons. However, it becomes restricted to Purkinje cells by P8. This exclusive expression in Purkinje cells is maintained throughout adulthood.

It is found in the membrane. It localises to the golgi apparatus. The protein localises to the trans-Golgi network membrane. Its subcellular location is the endosome membrane. The protein resides in the cell projection. It is found in the dendrite. It localises to the early endosome membrane. The protein localises to the late endosome membrane. Its subcellular location is the lysosome lumen. The protein resides in the recycling endosome membrane. It is found in the cytoplasmic vesicle membrane. It localises to the golgi stack membrane. The protein localises to the endosome. Its subcellular location is the multivesicular body membrane. The protein resides in the endoplasmic reticulum membrane. In terms of biological role, plays a role in the recycling mechanism in neurons of multiple receptors, including AMPAR, APP and L1CAM and acts at the level of early endosomes to promote sorting of receptors toward a recycling pathway. Regulates sorting and recycling of GRIA2 through interaction with GRIP1 and then contributes to the regulation of synaptic transmission and plasticity by affecting the recycling and targeting of AMPA receptors to the synapse. Is required for faithful sorting of L1CAM to axons by facilitating trafficking from somatodendritic early endosome or the recycling endosome. In an other hand, induces apoptosis via the activation of CASP3 in response to DNA damage. This Mus musculus (Mouse) protein is Neuronal vesicle trafficking-associated protein 1.